Here is a 400-residue protein sequence, read N- to C-terminus: PHD finger protein 24 (400 aa).

A lipid anchor (N-myristoyl glycine) is attached at Gly-2. Residues 30–108 (DRPSIRRTGE…FTPPAFIRPT (79 aa)) are disordered. An Omega-N-methylarginine modification is found at Arg-36. Ser-43 is modified (phosphoserine). Thr-47 bears the Phosphothreonine mark. Ser-51 bears the Phosphoserine mark. Over residues 78 to 97 (AWERLRDGRGVEPEEFDRTG) the composition is skewed to basic and acidic residues. The segment at 129–190 (NDEMCDVCEV…TGWSCHYCDN (62 aa)) adopts a PHD-type zinc-finger fold.

In Pongo abelii (Sumatran orangutan), this protein is PHD finger protein 24.